The primary structure comprises 382 residues: Protein phosphatase 1A (382 aa).

Glycine 2 carries the N-myristoyl glycine lipid modification. The PPM-type phosphatase domain maps to 23–291; the sequence is RYGLSSMQGW…DNMSVILICF (269 aa). Residues aspartate 60, glycine 61, aspartate 239, and aspartate 282 each contribute to the Mn(2+) site. Serine 375 and serine 377 each carry phosphoserine.

This sequence belongs to the PP2C family. As to quaternary structure, monomer. Interacts with SMAD2; the interaction dephosphorylates SMAD2 in its C-terminal SXS motif resulting in disruption of the SMAD2/SMAD4 complex, SMAD2 nuclear export and termination of the TGF-beta-mediated signaling. Interacts with SMAD2; the interaction dephosphorylates SMAD2 in its C-terminal SXS motif resulting in disruption of the SMAD2/SMAD4 complex, SMAD2 nuclear export and termination of the TGF-beta-mediated signaling. Interacts with the phosphorylated form of IKBKB/IKKB. It depends on Mg(2+) as a cofactor. The cofactor is Mn(2+). N-myristoylation is essential for the recognition of its substrates for dephosphorylation.

The protein localises to the nucleus. It is found in the cytoplasm. Its subcellular location is the cytosol. The protein resides in the membrane. The catalysed reaction is O-phospho-L-seryl-[protein] + H2O = L-seryl-[protein] + phosphate. The enzyme catalyses O-phospho-L-threonyl-[protein] + H2O = L-threonyl-[protein] + phosphate. Functionally, enzyme with a broad specificity. Negatively regulates TGF-beta signaling through dephosphorylating SMAD2 and SMAD3, resulting in their dissociation from SMAD4, nuclear export of the SMADs and termination of the TGF-beta-mediated signaling. Dephosphorylates PRKAA1 and PRKAA2. Plays an important role in the termination of TNF-alpha-mediated NF-kappa-B activation through dephosphorylating and inactivating IKBKB/IKKB. This is Protein phosphatase 1A (PPM1A) from Bos taurus (Bovine).